A 124-amino-acid chain; its full sequence is Large ribosomal subunit protein mL52 (124 aa).

The N-terminal 23 residues, 1–23 (MAALGMLLSTGVRRLHCGSAARA), are a transit peptide targeting the mitochondrion. The segment at 99–124 (LQEEKRKQQNALKPKGVLLQNPGPSQ) is disordered.

It belongs to the mitochondrion-specific ribosomal protein mL52 family. Component of the mitochondrial ribosome large subunit (39S) which comprises a 16S rRNA and about 50 distinct proteins.

Its subcellular location is the mitochondrion. In Bos taurus (Bovine), this protein is Large ribosomal subunit protein mL52 (MRPL52).